The primary structure comprises 840 residues: Mechanosensitive ion channel protein Msy2 (840 aa).

The Cytoplasmic portion of the chain corresponds to 1 to 68; it reads MNEHRREPHR…WFNNLSFITR (68 aa). Residues 69 to 89 form a helical membrane-spanning segment; it reads WITIWFPLAGALVIPLAVGVS. At 90–100 the chain is on the lumenal side; it reads PYPNAKLGGVR. The helical transmembrane segment at 101-121 threads the bilayer; that stretch reads IFWIFVWLEVAWGGFWVSRVI. The Cytoplasmic portion of the chain corresponds to 122–126; the sequence is ARLLP. A helical membrane pass occupies residues 127-147; that stretch reads YILYPLMGILPFTMYKYTVIL. The Lumenal portion of the chain corresponds to 148-151; it reads TALE. Residues 152–172 form a helical membrane-spanning segment; sequence MPLAIFFCSIVCVCTFSPIMI. The Cytoplasmic portion of the chain corresponds to 173–225; the sequence is GKGNFTSTTVTTTTSATATPTASASSNAVESVFVTKTAASVPSWIKVITKILG. A helical transmembrane segment spans residues 226–246; sequence AAVVTSIVLLLEKIFLHFIGF. At 247 to 449 the chain is on the lumenal side; sequence HYHEVQYQYR…LALGKLDRVG (203 aa). The 36-residue stretch at 392 to 427 folds into the EF-hand domain; the sequence is IPDDEINDIFHILDNDYSRTVTLDEMEQFTREISIE. Residues 450-491 form a helical membrane-spanning segment; it reads LGVVGIIAVLTFISFLDTSFATILAAFGTTLLSLSFVFSTSA. At 492-840 the chain is on the cytoplasmic side; the sequence is QELMSSIIFL…SQNMDGQIQY (349 aa). 2 disordered regions span residues 677 to 730 and 775 to 819; these read EYSK…KRED and ESNG…NTQA. Over residues 688–700 the composition is skewed to low complexity; that stretch reads SDISSTASSNSLS. Positions 708–730 are enriched in basic and acidic residues; it reads SESRNYHTHDEDNSSDDNHKRED. The segment covering 776–819 has biased composition (low complexity); the sequence is SNGNANGDNTATNSQGATDNGQTTTNTTQNNVDNTQATTDNTQA.

It belongs to the MscS (TC 1.A.23) family.

The protein resides in the endoplasmic reticulum membrane. Functionally, regulates intracellular calcium levels and cell volume for survival in response to hypo-osmotic shock. Involved in maintaining vacuole integrity and protecting the nuclear envelope upon hypo-osmotic shock. This chain is Mechanosensitive ion channel protein Msy2, found in Schizosaccharomyces pombe (strain 972 / ATCC 24843) (Fission yeast).